The chain runs to 512 residues: Neuronal acetylcholine receptor subunit alpha-2 (512 aa).

The signal sequence occupies residues 1-27; it reads MAPSHPAFQFWIHLYLWCLLLMPAVLA. The Extracellular segment spans residues 28–241; the sequence is QQGSHTHAED…VTYYFVIRRL (214 aa). N-linked (GlcNAc...) asparagine glycosylation is found at N56 and N106. C160 and C174 form a disulfide bridge. An N-linked (GlcNAc...) asparagine glycan is attached at N212. A disulfide bridge links C224 with C225. Helical transmembrane passes span 242–266, 274–292, and 308–329; these read PLFY…VFYL, ITLC…LLIT, and YLLF…VLNV. Topologically, residues 330–485 are cytoplasmic; it reads HHRSPSTHNM…WKYVAMVVDR (156 aa). The helical transmembrane segment at 486 to 504 threads the bilayer; sequence IFLWLFIIVCFLGTIGLFL.

The protein belongs to the ligand-gated ion channel (TC 1.A.9) family. Acetylcholine receptor (TC 1.A.9.1) subfamily. Alpha-2/CHRNA2 sub-subfamily. As to quaternary structure, neuronal AChR is composed of two different types of subunits: alpha and non-alpha (beta). CHRNA2/alpha-2 subunit can be combined to CHRNB2/beta-2 or CHRNB4/beta-4 to give rise to functional receptors. Both CHRNA2:CHRNB2 and CHRNA2:CHRNB4 nAChR complexes are heteropentamers with two subtypes: LS (low agonist sensitivity) with a (CHRNA2)3:(CHRNB2/4)2 and HS (high agonist sensitivity) with a (CHRNA2)2:(CHRNB2/4)3 stoichiometries; the subtypes differ in their subunit binding interfaces which are involved in ligand binding.

It localises to the synaptic cell membrane. It is found in the cell membrane. The catalysed reaction is Ca(2+)(in) = Ca(2+)(out). The enzyme catalyses K(+)(in) = K(+)(out). It catalyses the reaction Na(+)(in) = Na(+)(out). Component of neuronal acetylcholine receptors (nAChRs) that function as pentameric, ligand-gated cation channels with high calcium permeability among other activities. nAChRs are excitatory neurotrasnmitter receptors formed by a collection of nAChR subunits known to mediate synaptic transmission in the nervous system and the neuromuscular junction. Each nAchR subunit confers differential attributes to channel properties, including activation, deactivation and desensitization kinetics, pH sensitivity, cation permeability, and binding to allosteric modulators. CHRNA2 forms heteropentameric neuronal acetylcholine receptors with CHRNB2 and CHRNB4 and plays a role in nicotine dependence. The chain is Neuronal acetylcholine receptor subunit alpha-2 (Chrna2) from Mus musculus (Mouse).